Here is a 430-residue protein sequence, read N- to C-terminus: MALLHSGRVLSGVASAFHPGLAAAASARASSWWAHVEMGPPDPILGVTEAFKRDTNSKKMNLGVGAYRDDNGKPYVLPSVRKAEAQIAAKNLDKEYLPIGGLAEFCKASAELALGENNEVLKSGRYVTVQTISGTGALRIGANFLQRFFKFSRDVFLPKPSWGNHTPIFRDAGMQLHSYRYYDPKTCGFDFTGALEDISKIPAQSVILLHACAHNPTGVDPRPEQWKEMATLVKKNNLFAFFDMAYQGFASGDGNKDAWAVRHFIEQGINVCLCQSYAKNMGLYGERVGAFTVVCKDAEEAKRVESQLKILIRPMYSNPPVNGARIASTILTSPDLRQQWLQEVKGMADRIISMRTQLVSNLKKEGSSHNWQHIVDQIGMFCFTGIKPEQVERLTKEFSIYMTKDGRISVAGVTSGNVGYLAHAIHQVTK.

The N-terminal 29 residues, Met1–Ala29, are a transit peptide targeting the mitochondrion. A Phosphothreonine modification is found at Thr48. Lys59 is modified (N6-acetyllysine). Gly65 contacts substrate. Lys73 is subject to N6-acetyllysine; alternate. The residue at position 73 (Lys73) is an N6-succinyllysine; alternate. N6-acetyllysine is present on Lys82. Residue Lys90 is modified to N6-acetyllysine; alternate. An N6-succinyllysine; alternate modification is found at Lys90. A 3'-nitrotyrosine; alternate modification is found at Tyr96. Tyr96 carries the post-translational modification Phosphotyrosine; alternate. An N6-acetyllysine; alternate mark is found at Lys107, Lys122, and Lys159. An N6-succinyllysine; alternate mark is found at Lys107, Lys122, and Lys159. Trp162 contacts substrate. At Lys185 the chain carries N6-acetyllysine; alternate. Residue Lys185 is modified to N6-succinyllysine; alternate. Asn215 contacts substrate. At Lys227 the chain carries N6-succinyllysine. The residue at position 234 (Lys234) is an N6-acetyllysine. Lys279 and Lys296 each carry N6-acetyllysine; alternate. An N6-(pyridoxal phosphate)lysine; alternate modification is found at Lys279. Lys296 bears the N6-succinyllysine; alternate mark. Lys302 is modified (N6-acetyllysine). N6-acetyllysine; alternate is present on Lys309. The residue at position 309 (Lys309) is an N6-succinyllysine; alternate. An Asymmetric dimethylarginine modification is found at Arg313. Residue Lys345 is modified to N6-acetyllysine. N6-acetyllysine; alternate is present on Lys363. Lys363 bears the N6-succinyllysine; alternate mark. N6-acetyllysine is present on residues Lys364 and Lys387. An N6-acetyllysine; alternate mark is found at Lys396 and Lys404. N6-succinyllysine; alternate occurs at positions 396 and 404. A substrate-binding site is contributed by Arg407.

Belongs to the class-I pyridoxal-phosphate-dependent aminotransferase family. Homodimer. The cofactor is pyridoxal 5'-phosphate.

Its subcellular location is the mitochondrion matrix. It localises to the cell membrane. It catalyses the reaction L-aspartate + 2-oxoglutarate = oxaloacetate + L-glutamate. The enzyme catalyses L-kynurenine + 2-oxoglutarate = kynurenate + L-glutamate + H2O. In terms of biological role, catalyzes the irreversible transamination of the L-tryptophan metabolite L-kynurenine to form kynurenic acid (KA). As a member of the malate-aspartate shuttle, it has a key role in the intracellular NAD(H) redox balance. Is important for metabolite exchange between mitochondria and cytosol, and for amino acid metabolism. Facilitates cellular uptake of long-chain free fatty acids. This Sus scrofa (Pig) protein is Aspartate aminotransferase, mitochondrial (GOT2).